The primary structure comprises 247 residues: ATP synthase subunit a, chloroplastic (247 aa).

A run of 5 helical transmembrane segments spans residues 38 to 58 (QVLITSWVVITILLGSVVIAV), 95 to 115 (VPFIGTMFLFIFVSNWSGALL), 134 to 154 (INTTVALALLTSAAYFYAGLS), 199 to 219 (LVVVVLVSLVPLVIPIPVMFL), and 220 to 240 (GLFTSGIQALIFATLAAAYIG).

The protein belongs to the ATPase A chain family. F-type ATPases have 2 components, CF(1) - the catalytic core - and CF(0) - the membrane proton channel. CF(1) has five subunits: alpha(3), beta(3), gamma(1), delta(1), epsilon(1). CF(0) has four main subunits: a, b, b' and c.

The protein localises to the plastid. The protein resides in the chloroplast thylakoid membrane. Its function is as follows. Key component of the proton channel; it plays a direct role in the translocation of protons across the membrane. The chain is ATP synthase subunit a, chloroplastic from Hordeum vulgare (Barley).